A 326-amino-acid chain; its full sequence is Peroxidase 43 (326 aa).

Residues Met-1–Ala-24 form the signal peptide. Disulfide bonds link Cys-35/Cys-112, Cys-68/Cys-73, Cys-118/Cys-322, and Cys-196/Cys-228. The active-site Proton acceptor is the His-66. Residues Asp-67, Val-70, Gly-72, Asp-74, and Ser-76 each coordinate Ca(2+). N-linked (GlcNAc...) asparagine glycosylation is present at Asn-151. Pro-159 serves as a coordination point for substrate. Position 189 (His-189) interacts with heme b. Thr-190 serves as a coordination point for Ca(2+). Positions 241, 244, and 249 each coordinate Ca(2+).

It belongs to the peroxidase family. Classical plant (class III) peroxidase subfamily. The cofactor is heme b. Ca(2+) serves as cofactor.

The protein localises to the secreted. It catalyses the reaction 2 a phenolic donor + H2O2 = 2 a phenolic radical donor + 2 H2O. In terms of biological role, removal of H(2)O(2), oxidation of toxic reductants, biosynthesis and degradation of lignin, suberization, auxin catabolism, response to environmental stresses such as wounding, pathogen attack and oxidative stress. These functions might be dependent on each isozyme/isoform in each plant tissue. In Arabidopsis thaliana (Mouse-ear cress), this protein is Peroxidase 43 (PER43).